A 132-amino-acid chain; its full sequence is Subtelomeric hrmA-associated cluster protein AFUB_079000 (132 aa).

Part of the subtelomeric hrmA-associated cluster (HAC) containing genes that alter the hyphal surface (such as reduced total chitin or increased beta-glucan exposure) and perturb inter-hyphal interactions within the developing biofilms, resulting in a loss of vertically aligned polarized growing filaments. Consequently, this hypoxia-typic morphotype (called H-MORPH) with altered biofilm architecture leads to increased hypoxia fitness, increased host inflammation, rapid disease progression, and mortality in a murine model of invasive aspergillosis. This is Subtelomeric hrmA-associated cluster protein AFUB_079000 from Aspergillus fumigatus (strain CBS 144.89 / FGSC A1163 / CEA10) (Neosartorya fumigata).